Consider the following 69-residue polypeptide: Putative membrane protein insertion efficiency factor (69 aa).

Belongs to the UPF0161 family.

Its subcellular location is the cell membrane. Its function is as follows. Could be involved in insertion of integral membrane proteins into the membrane. This is Putative membrane protein insertion efficiency factor from Clostridium beijerinckii (strain ATCC 51743 / NCIMB 8052) (Clostridium acetobutylicum).